The sequence spans 270 residues: tRNA pseudouridine synthase A (270 aa).

Catalysis depends on D51, which acts as the Nucleophile. Residue Y109 participates in substrate binding.

It belongs to the tRNA pseudouridine synthase TruA family. As to quaternary structure, homodimer.

It carries out the reaction uridine(38/39/40) in tRNA = pseudouridine(38/39/40) in tRNA. Its function is as follows. Formation of pseudouridine at positions 38, 39 and 40 in the anticodon stem and loop of transfer RNAs. This is tRNA pseudouridine synthase A from Burkholderia thailandensis (strain ATCC 700388 / DSM 13276 / CCUG 48851 / CIP 106301 / E264).